The primary structure comprises 127 residues: Ribosome-binding factor A (127 aa).

Belongs to the RbfA family. As to quaternary structure, monomer. Binds 30S ribosomal subunits, but not 50S ribosomal subunits or 70S ribosomes.

It localises to the cytoplasm. Functionally, one of several proteins that assist in the late maturation steps of the functional core of the 30S ribosomal subunit. Associates with free 30S ribosomal subunits (but not with 30S subunits that are part of 70S ribosomes or polysomes). Required for efficient processing of 16S rRNA. May interact with the 5'-terminal helix region of 16S rRNA. The chain is Ribosome-binding factor A from Chloroflexus aggregans (strain MD-66 / DSM 9485).